We begin with the raw amino-acid sequence, 92 residues long: Small ribosomal subunit protein uS19c (92 aa).

This sequence belongs to the universal ribosomal protein uS19 family.

It localises to the plastid. The protein resides in the chloroplast. Its function is as follows. Protein S19 forms a complex with S13 that binds strongly to the 16S ribosomal RNA. This chain is Small ribosomal subunit protein uS19c, found in Huperzia lucidula (Shining clubmoss).